A 652-amino-acid polypeptide reads, in one-letter code: MSRFNPSPVSLSVTLGLMFSASAFAQDATKTDETMVVTAAGYAQVIQNAPASISVISREDLESRYYRDVTDALKSVPGVTVTGGGDTTDISIRGMGSNYTLILVDGKRQTSRQTRPNSDGPGIEQGWLPPLQAIERIEVIRGPMSTLYGSDAIGGVINIITRKDQQQWSGNVQLSTVVQENRASGDEQSANFFVTGPLSDALSLQVYGQTTQRDEDEIEHGYGDKSLRSLTSKLNYQLNPDHQLQLEAGVSAQDRENNVGKSAQSSGCRGTCSNTDNQYRRNHVAVSHQGDWQGVGQSDTYLQYEENTNKSREMSIDNTVFKSTLVAPIGEHMLSFGVEGKHESLEDKTSNKISSRTHISNTQWAGFIEDEWALAEQFRLTFGGRLDHDKNYGSHFSPRVYGVWNLDPLWTVKGGVSTGFRAPQLREVTPDWGQVSGGGNIYGNPDLQPETSINKELSLMYSTGSGLAASLTAFHNDFKDKITRVACPANICTAGPNQWGATPTYRVNIDEAETYGAEATLSLPITESVELSSSYTYTHSEQKSGNFAGRPLLQLPKHLFNANLSWQTTDRLNSWANLNYRGKEMQPEGGASNDDFIAPSYTFIDTGVTYALTDTATIKAAVYNLFDQEVNYAEYGYVEDGRRYWLGLDIAF.

The signal sequence occupies residues 1–25; it reads MSRFNPSPVSLSVTLGLMFSASAFA. The TonB box motif lies at 33–40; that stretch reads ETMVVTAA. The TBDR plug domain maps to 45–162; that stretch reads VIQNAPASIS…IGGVINIITR (118 aa). The TBDR beta-barrel domain maps to 167–652; sequence QWSGNVQLST…RYWLGLDIAF (486 aa). The TonB C-terminal box motif lies at 635–652; the sequence is YGYVEDGRRYWLGLDIAF.

It belongs to the TonB-dependent receptor family.

The protein resides in the cell outer membrane. In terms of biological role, involved in the initial step of iron uptake by binding ferric vibriobactin, an iron chelatin siderophore that allows V.cholerae to extract iron from the environment. In Vibrio cholerae serotype O1 (strain ATCC 39541 / Classical Ogawa 395 / O395), this protein is Iron-regulated outer membrane virulence protein (irgA).